Consider the following 1045-residue polypeptide: Tyrosine-protein kinase-like otk (1045 aa).

A signal peptide spans 1 to 25 (MPIVMDMNMLLMLSLAFTVMAPASA). Ig-like C2-type domains are found at residues 26–116 (SSSR…AKLS), 115–200 (LSVI…RVMS), 260–373 (PEGL…APVN), 376–469 (PGAL…VAIN), and 474–564 (PRFS…VRLL). At 26–587 (SSSRFTQPPQ…AGDGFLVTRA (562 aa)) the chain is on the extracellular side. 4 cysteine pairs are disulfide-bonded: Cys-49–Cys-97, Cys-139–Cys-189, Cys-285–Cys-362, and Cys-406–Cys-453. 8 N-linked (GlcNAc...) asparagine glycosylation sites follow: Asn-344, Asn-424, Asn-435, Asn-442, Asn-450, Asn-463, Asn-518, and Asn-530. Cys-496 and Cys-548 are joined by a disulfide. A helical transmembrane segment spans residues 588 to 608 (VLITMTVALAYIVLVVGLMLW). Topologically, residues 609 to 1045 (CRYRRQARKA…LSKAMQAAEK (437 aa)) are cytoplasmic. The tract at residues 628–676 (AGGDQAESGKNTEQEPCLSKQRNGHGKSRTAANGDAQKSDDTACSQQSK) is disordered. Phosphoserine is present on Ser-681. One can recognise a Protein kinase; inactive domain in the interval 695–1040 (LSELIQIGRG…QLGAALSKAM (346 aa)). The segment at 722 to 790 (ASPSDKDADT…QPQEQAQSES (69 aa)) is disordered. Residues 725–736 (SDKDADTEKQHS) show a composition bias toward basic and acidic residues. Gly residues predominate over residues 743–752 (GASGASGCGS). Acidic residues predominate over residues 771 to 782 (DDIEEIKEEEQP).

It belongs to the protein kinase superfamily. Tyr protein kinase family. Insulin receptor subfamily. In terms of assembly, interacts with plexA; component of a receptor complex that mediates the repulsive signaling in response to Semaphorin ligands.

Its subcellular location is the cell membrane. In terms of biological role, acts as a calcium-dependent, homophilic cell adhesion molecule that regulates neural recognition during the development of the nervous system. Component of the repulsive Plexin signaling response to regulate motor axon guidance at the embryonic stage. Also component of a receptor complex that is required in the adult visual system to innervate the lamina layer; specific targeting of R1-R6 axons. In Drosophila mojavensis (Fruit fly), this protein is Tyrosine-protein kinase-like otk.